We begin with the raw amino-acid sequence, 90 residues long: MSAVPFTRVLLISGFLAHLLLSTFVTLTVCKEVTEESDDLSKRNVLQRQLWAVGSLMGKKSLENTNRRSDEDMEISALFRGSPLKVKRSD.

The first 30 residues, 1–30 (MSAVPFTRVLLISGFLAHLLLSTFVTLTVC), serve as a signal peptide directing secretion. Residues 31–48 (KEVTEESDDLSKRNVLQR) constitute a propeptide that is removed on maturation. Gln-49 carries the post-translational modification Pyrrolidone carboxylic acid. Position 57 is a methionine amide (Met-57). Positions 61–90 (SLENTNRRSDEDMEISALFRGSPLKVKRSD) are excised as a propeptide.

The protein belongs to the bombesin/neuromedin-B/ranatensin family. As to expression, expressed by the skin glands.

The protein resides in the secreted. The sequence is that of [Leu8]-phyllolitorin from Phyllomedusa sauvagei (Sauvage's leaf frog).